The primary structure comprises 348 residues: Flagellar P-ring protein (348 aa).

The N-terminal stretch at 1–24 is a signal peptide; it reads MRRKNNNKIWIWVATLILSISALY.

This sequence belongs to the FlgI family. In terms of assembly, the basal body constitutes a major portion of the flagellar organelle and consists of four rings (L,P,S, and M) mounted on a central rod.

Its subcellular location is the periplasm. The protein localises to the bacterial flagellum basal body. Assembles around the rod to form the L-ring and probably protects the motor/basal body from shearing forces during rotation. This is Flagellar P-ring protein from Helicobacter hepaticus (strain ATCC 51449 / 3B1).